A 145-amino-acid chain; its full sequence is Large ribosomal subunit protein uL15 (145 aa).

Over residues 1 to 11 the composition is skewed to polar residues; sequence MELHSLKSTPG. The interval 1 to 48 is disordered; it reads MELHSLKSTPGSRKEKHRKGRGHAAGKGKQAGKGQSGQRKRSKVRLGF. Residues 14-26 show a composition bias toward basic residues; that stretch reads KEKHRKGRGHAAG.

The protein belongs to the universal ribosomal protein uL15 family. In terms of assembly, part of the 50S ribosomal subunit.

Functionally, binds to the 23S rRNA. The protein is Large ribosomal subunit protein uL15 of Mycoplasmopsis pulmonis (strain UAB CTIP) (Mycoplasma pulmonis).